A 404-amino-acid polypeptide reads, in one-letter code: AT-hook motif nuclear-localized protein 6 (404 aa).

The disordered stretch occupies residues Thr40–Ser112. Pro residues predominate over residues Pro45–Ala55. Residues Pro56 to Thr70 are compositionally biased toward low complexity. The Bipartite nuclear localization signal motif lies at Lys76–Lys84. The segment at residues Lys76–Asp88 is a DNA-binding region (a.T hook). Over residues Pro98–Ser112 the composition is skewed to low complexity. In terms of domain architecture, PPC spans Gly157–Gln299. Residues Ala365 to Gly404 form a disordered region. A compositionally biased stretch (acidic residues) spans His382–Ser394.

The protein resides in the nucleus. Functionally, transcription factor that specifically binds AT-rich DNA sequences related to the nuclear matrix attachment regions (MARs). This is AT-hook motif nuclear-localized protein 6 from Arabidopsis thaliana (Mouse-ear cress).